Here is a 1107-residue protein sequence, read N- to C-terminus: Miniconductance mechanosensitive channel MscM (1107 aa).

The signal sequence occupies residues 1-19; the sequence is MRLIITFLMAWCLSWGAYA. The next 11 helical transmembrane spans lie at 467–487, 522–542, 551–571, 600–620, 628–648, 674–694, 698–718, 785–805, 828–848, 875–895, and 910–930; these read VMML…ILVG, LFWS…LGYG, LAVA…VVMI, YLMS…FDNL, SLGR…TLSL, MMIG…LATA, LARL…YHVI, ILML…HSAF, PITL…TQLV, TITK…MIGI, and GLGF…IILF.

It belongs to the MscS (TC 1.A.23) family. In terms of assembly, homoheptamer.

The protein localises to the cell inner membrane. Functionally, mechanosensitive channel that protects cells against hypoosmotic stress when highly overexpressed. Gates spontaneously in response to increased membrane tension. The polypeptide is Miniconductance mechanosensitive channel MscM (mscM) (Escherichia coli (strain K12)).